Reading from the N-terminus, the 1806-residue chain is Collagen alpha-1(XI) chain (1806 aa).

The signal sequence occupies residues 1-35 (MEPWSSRWKTKRWLWDFTVTTLALTFLFQAREVRG). Residues 36 to 511 (AAPVDVLKAL…DGSKGPTISA (476 aa)) constitute a propeptide, N-terminal propeptide. Disulfide bonds link Cys61–Cys243 and Cys182–Cys236. A Laminin G-like domain is found at 71-243 (DTAYRVSKQA…DYCEHYSPDC (173 aa)). The nonhelical region stretch occupies residues 230 to 419 (KAAYDYCEHY…DITETSINGH (190 aa)). A triple-helical region (interrupted) region spans residues 420-508 (GAYGEKGQKG…YGGDGSKGPT (89 aa)). The disordered stretch occupies residues 439–508 (LVEGPPGPAG…YGGDGSKGPT (70 aa)). The region spanning 442–490 (GPPGPAGPAGIMGPPGLQGPTGPPGDPGDRGPPGRPGLPGADGLPGPPG) is the Collagen-like 1 domain. 2 stretches are compositionally biased toward low complexity: residues 449–461 (PAGIMGPPGLQGP) and 479–496 (LPGADGLPGPPGTMLMLP). The segment at 509 to 511 (ISA) is short nonhelical segment. Residues 512–528 (QEAQAQAILQQARIALR) form a telopeptide region. Residues 528 to 1563 (RGPPGPMGLT…TRRHTEGMQA (1036 aa)) are disordered. The segment at 529–1542 (GPPGPMGLTG…PGSPGPPGEV (1014 aa)) is triple-helical region. Collagen-like domains are found at residues 532–586 (GPMG…GADG), 583–641 (GADG…EIGP), 616–674 (GERG…VDGP), and 643–699 (GLPG…PGPQ). Gly residues-rich tracts occupy residues 541–550 (GPVGGPGSSG) and 583–592 (GADGGRGMPG). Lys612 bears the Allysine mark. Residues 641 to 662 (PRGLPGEAGPRGLLGPRGTPGA) are compositionally biased toward low complexity. Positions 699–710 (QGLPGPQGPIGP) are enriched in pro residues. Positions 717–728 (QGKPGLAGLPGA) are enriched in low complexity. Positions 807 to 816 (RGEDGPEGPK) are enriched in basic and acidic residues. Low complexity-rich tracts occupy residues 875–903 (KPGPRGQRGPTGPRGSRGARGPTGKPGPK), 918–927 (RGPQGPQGPV), 941–960 (KDGLPGHPGQRGETGFQGKT), 971–981 (PQGPTGETGPI), 1032–1041 (RGLPGAQGAP), and 1058–1074 (SPGERGSAGTAGPIGLP). Positions 1076-1085 (RPGPQGPPGP) are enriched in pro residues. Residues 1086–1110 (AGEKGAPGEKGPQGPAGRDGVQGPV) show a composition bias toward low complexity. The span at 1162–1171 (GIAGGDGEPG) shows a compositional bias: gly residues. Pro residues-rich tracts occupy residues 1218-1229 (MGPPGPPGPRGP) and 1343-1362 (QPGPPGPSGEAGPPGPPGKR). 2 stretches are compositionally biased toward low complexity: residues 1385 to 1394 (AEGPPGKTGP) and 1419 to 1428 (QGLPGAAGQD). 3 Collagen-like domains span residues 1393–1450 (GPVG…GSKG), 1429–1487 (GPPG…AKGD), and 1483–1541 (GAKG…PPGE). The span at 1430 to 1439 (PPGPMGPPGL) shows a compositional bias: pro residues. At Lys1452 the chain carries Allysine. Residues 1455–1464 (PGLIGLIGPP) show a composition bias toward low complexity. Gly residues predominate over residues 1483–1492 (GAKGDGGIPG). 2 stretches are compositionally biased toward pro residues: residues 1493 to 1509 (PAGPLGPPGPPGLPGPQ) and 1530 to 1539 (PGPPGSPGPP). A nonhelical region (C-terminal) region spans residues 1543-1563 (IQPLPILSSKKTRRHTEGMQA). Residues 1564-1806 (DADDNILDYS…FEVGPVCFLG (243 aa)) constitute a propeptide, C-terminal propeptide. The Fibrillar collagen NC1 domain occupies 1577 to 1805 (EEIFGSLNSL…GFEVGPVCFL (229 aa)). Cys1607 and Cys1639 are disulfide-bonded. Ca(2+)-binding residues include Asp1625, Asn1627, Gln1628, Cys1630, and Asp1633. A glycan (N-linked (GlcNAc...) asparagine) is linked at Asn1640. 2 cysteine pairs are disulfide-bonded: Cys1648/Cys1803 and Cys1714/Cys1757.

This sequence belongs to the fibrillar collagen family. As to quaternary structure, trimers composed of three different chains: alpha 1(XI), alpha 2(XI), and alpha 3(XI). Alpha 3(XI) is a post-translational modification of alpha 1(II). Alpha 1(V) can also be found instead of alpha 3(XI)=1(II). Post-translationally, prolines at the third position of the tripeptide repeating unit (G-X-Y) are hydroxylated in some or all of the chains. In terms of processing, N-glycosylated. Cartilage, placenta and some tumor or virally transformed cell lines. Isoforms using exon IIA or IIB are found in the cartilage while isoforms using only exon IIB are found in the tendon.

The protein localises to the secreted. It is found in the extracellular space. Its subcellular location is the extracellular matrix. In terms of biological role, may play an important role in fibrillogenesis by controlling lateral growth of collagen II fibrils. This chain is Collagen alpha-1(XI) chain (COL11A1), found in Homo sapiens (Human).